We begin with the raw amino-acid sequence, 336 residues long: Aspartate carbamoyltransferase catalytic subunit (336 aa).

Residues Arg-72 and Thr-73 each coordinate carbamoyl phosphate. Lys-100 contacts L-aspartate. Carbamoyl phosphate contacts are provided by Arg-122, His-152, and Gln-155. 2 residues coordinate L-aspartate: Arg-185 and Arg-240. Positions 281 and 282 each coordinate carbamoyl phosphate.

It belongs to the aspartate/ornithine carbamoyltransferase superfamily. ATCase family. As to quaternary structure, heterododecamer (2C3:3R2) of six catalytic PyrB chains organized as two trimers (C3), and six regulatory PyrI chains organized as three dimers (R2).

The catalysed reaction is carbamoyl phosphate + L-aspartate = N-carbamoyl-L-aspartate + phosphate + H(+). It functions in the pathway pyrimidine metabolism; UMP biosynthesis via de novo pathway; (S)-dihydroorotate from bicarbonate: step 2/3. In terms of biological role, catalyzes the condensation of carbamoyl phosphate and aspartate to form carbamoyl aspartate and inorganic phosphate, the committed step in the de novo pyrimidine nucleotide biosynthesis pathway. In Marinobacter nauticus (strain ATCC 700491 / DSM 11845 / VT8) (Marinobacter aquaeolei), this protein is Aspartate carbamoyltransferase catalytic subunit.